The primary structure comprises 107 residues: uncharacterized protein (107 aa).

This is an uncharacterized protein from Dictyostelium discoideum (Social amoeba).